The primary structure comprises 67 residues: Andropin (67 aa).

The first 19 residues, 1–19 (MKYFLVLVVLTLILAISVG), serve as a signal peptide directing secretion.

This sequence belongs to the andropin family. Ejaculatory duct of adult males.

The protein resides in the secreted. Male-specific peptide with moderate activity against Gram-positive bacteria. In Drosophila orena (Fruit fly), this protein is Andropin (Anp).